Here is a 655-residue protein sequence, read N- to C-terminus: FYVE, RhoGEF and PH domain-containing protein 2 (655 aa).

S11 and S48 each carry phosphoserine. The segment at 18 to 64 is disordered; the sequence is VFENSRTPEAAPRGQRLEDVHHRPECRPPESPGPREKTNVGEAVGSE. Basic and acidic residues predominate over residues 32-56; it reads QRLEDVHHRPECRPPESPGPREKTN. The DH domain occupies 102-290; the sequence is PEKKIVQELL…FSAAQHSNAA (189 aa). One can recognise a PH 1 domain in the interval 319–418; the sequence is TLLREGPVLK…WMQAFQAAID (100 aa). Residues 458-518 form an FYVE-type zinc finger; that stretch reads DKMVTMCMRC…VCLHCYAFLT (61 aa). Residues C464, C467, C481, C484, C489, C492, C510, and C513 each contribute to the Zn(2+) site. The region spanning 544 to 641 is the PH 2 domain; it reads QSLMCSFLQL…WVKAMERAAS (98 aa). At S654 the chain carries Phosphoserine.

Its subcellular location is the cytoplasm. The protein resides in the cytoskeleton. The protein localises to the nucleus. It is found in the early endosome. It localises to the early endosome membrane. Its subcellular location is the cell projection. The protein resides in the ruffle membrane. In terms of biological role, activates CDC42, a member of the Ras-like family of Rho- and Rac proteins, by exchanging bound GDP for free GTP. Activates JNK1 via CDC42 but not RAC1. Binds to phosphatidylinositol 4,5-bisphosphate, phosphatidylinositol 3,4,5-trisphosphate, phosphatidylinositol 5-monophosphate, phosphatidylinositol 4-monophosphate and phosphatidylinositol 3-monophosphate. The protein is FYVE, RhoGEF and PH domain-containing protein 2 (FGD2) of Homo sapiens (Human).